Consider the following 283-residue polypeptide: Peflin (283 aa).

8 tandem repeats follow at residues 21–30 (PQTNYYGGQQ), 36–44 (QPAASYGRP), 45–54 (APGAPYGSPP), 55–62 (SGGVYGHP), 71–79 (APGGPYGGQ), 80–87 (APGGPYSV), 88–95 (PGSTPYGS), and 96–104 (QQHGSYGQG). The tract at residues 21–104 (PQTNYYGGQQ…SQQHGSYGQG (84 aa)) is 8 X 9 AA approximate tandem repeat of [AP]-P-G-G-P-Y-G-G-P-P. Low complexity predominate over residues 37 to 70 (PAASYGRPAPGAPYGSPPSGGVYGHPVPGSAAPG). The disordered stretch occupies residues 37–113 (PAASYGRPAP…GAPAGNIPPG (77 aa)). Residues 71-81 (APGGPYGGQAP) show a composition bias toward gly residues. Low complexity predominate over residues 93 to 104 (YGSQQHGSYGQG). 5 consecutive EF-hand domains span residues 113–148 (GVDP…TNWS), 154–179 (TCTM…SALW), 180–215 (RFIQ…MGYQ), 216–252 (LSPQ…LQSM), and 253–282 (TEAF…TTRL). Positions 126, 128, 130, 132, and 137 each coordinate Ca(2+). Residues D193, D195, S197, S199, and E204 each contribute to the Ca(2+) site.

Heterodimer; heterodimerizes (via the EF-hand 5) with pdcd6.

It is found in the cytoplasm. The protein resides in the endoplasmic reticulum. It localises to the membrane. Its subcellular location is the cytoplasmic vesicle. The protein localises to the COPII-coated vesicle membrane. In terms of biological role, calcium-binding protein that acts as an adapter that bridges unrelated proteins or stabilizes weak protein-protein complexes in response to calcium. Acts as a negative regulator of ER-Golgi transport. In Xenopus laevis (African clawed frog), this protein is Peflin.